Reading from the N-terminus, the 206-residue chain is Holliday junction branch migration complex subunit RuvA (206 aa).

Positions 1-63 (MIASLRGTVI…EDAMKLYGFI (63 aa)) are domain I. Residues 64–142 (DNESREMFSV…AFAAGVVDEA (79 aa)) are domain II. The flexible linker stretch occupies residues 143–153 (GEQISLPNANI). Positions 154 to 206 (ASEVVVEQVSQALVGLGFSEKQSDDAVSFVLAADPSLDTSGALRAALAKLSGK) are domain III.

Belongs to the RuvA family. Homotetramer. Forms an RuvA(8)-RuvB(12)-Holliday junction (HJ) complex. HJ DNA is sandwiched between 2 RuvA tetramers; dsDNA enters through RuvA and exits via RuvB. An RuvB hexamer assembles on each DNA strand where it exits the tetramer. Each RuvB hexamer is contacted by two RuvA subunits (via domain III) on 2 adjacent RuvB subunits; this complex drives branch migration. In the full resolvosome a probable DNA-RuvA(4)-RuvB(12)-RuvC(2) complex forms which resolves the HJ.

The protein resides in the cytoplasm. In terms of biological role, the RuvA-RuvB-RuvC complex processes Holliday junction (HJ) DNA during genetic recombination and DNA repair, while the RuvA-RuvB complex plays an important role in the rescue of blocked DNA replication forks via replication fork reversal (RFR). RuvA specifically binds to HJ cruciform DNA, conferring on it an open structure. The RuvB hexamer acts as an ATP-dependent pump, pulling dsDNA into and through the RuvAB complex. HJ branch migration allows RuvC to scan DNA until it finds its consensus sequence, where it cleaves and resolves the cruciform DNA. This chain is Holliday junction branch migration complex subunit RuvA, found in Corynebacterium glutamicum (strain R).